A 62-amino-acid polypeptide reads, in one-letter code: uncharacterized protein (62 aa).

It localises to the plastid. The protein localises to the chloroplast. This is an uncharacterized protein from Chlamydomonas reinhardtii (Chlamydomonas smithii).